A 344-amino-acid chain; its full sequence is Methionine import ATP-binding protein MetN 1 (344 aa).

Residues 2–241 form the ABC transporter domain; sequence IELRNLSQRF…PHHEVTRALI (240 aa). 38 to 45 provides a ligand contact to ATP; it reads GRSGAGKS.

It belongs to the ABC transporter superfamily. Methionine importer (TC 3.A.1.24) family. As to quaternary structure, the complex is composed of two ATP-binding proteins (MetN), two transmembrane proteins (MetI) and a solute-binding protein (MetQ).

The protein resides in the cell inner membrane. The catalysed reaction is L-methionine(out) + ATP + H2O = L-methionine(in) + ADP + phosphate + H(+). It carries out the reaction D-methionine(out) + ATP + H2O = D-methionine(in) + ADP + phosphate + H(+). Its function is as follows. Part of the ABC transporter complex MetNIQ involved in methionine import. Responsible for energy coupling to the transport system. The protein is Methionine import ATP-binding protein MetN 1 of Burkholderia ambifaria (strain ATCC BAA-244 / DSM 16087 / CCUG 44356 / LMG 19182 / AMMD) (Burkholderia cepacia (strain AMMD)).